The primary structure comprises 332 residues: Fructose-1,6-bisphosphatase class 1 (332 aa).

Positions 89, 110, 112, and 113 each coordinate Mg(2+). Substrate contacts are provided by residues 113–116 (DGSS), Asn-206, Tyr-239, 257–259 (YLY), and Lys-269. Glu-275 contributes to the Mg(2+) binding site.

Belongs to the FBPase class 1 family. Homotetramer. Requires Mg(2+) as cofactor.

The protein resides in the cytoplasm. The catalysed reaction is beta-D-fructose 1,6-bisphosphate + H2O = beta-D-fructose 6-phosphate + phosphate. It participates in carbohydrate biosynthesis; gluconeogenesis. The protein is Fructose-1,6-bisphosphatase class 1 of Salmonella gallinarum (strain 287/91 / NCTC 13346).